We begin with the raw amino-acid sequence, 437 residues long: ATP-dependent protease ATPase subunit HslU (437 aa).

Residues Val-18, 60 to 65 (GCGKTE), Asp-250, Glu-315, and Arg-387 contribute to the ATP site.

The protein belongs to the ClpX chaperone family. HslU subfamily. In terms of assembly, a double ring-shaped homohexamer of HslV is capped on each side by a ring-shaped HslU homohexamer. The assembly of the HslU/HslV complex is dependent on binding of ATP.

It is found in the cytoplasm. In terms of biological role, ATPase subunit of a proteasome-like degradation complex; this subunit has chaperone activity. The binding of ATP and its subsequent hydrolysis by HslU are essential for unfolding of protein substrates subsequently hydrolyzed by HslV. HslU recognizes the N-terminal part of its protein substrates and unfolds these before they are guided to HslV for hydrolysis. The protein is ATP-dependent protease ATPase subunit HslU of Methylorubrum populi (strain ATCC BAA-705 / NCIMB 13946 / BJ001) (Methylobacterium populi).